We begin with the raw amino-acid sequence, 343 residues long: MITPQQALTRLVEQREIFHDEMLALMRQIMRGELTPVQIAGVITGLRVKKETVGEIAAAAEVMREFALEVPVQQREHLVDTCGTGGDAAHTFNISTTAAFVAAAAGARVAKHGGRSVSSTSGSADVLEALGVNLALTPEQVAASIDAIGIGFMFAPNFHGAMRHAAPVRRELGVRTLFNILGPLTNPANAPHQLLGVFHADLVGILVRVLQRLGSSHVMVVHGSDGMDEITLAGDTLIGELKDGEVSEYTINPREFGLQPCGSDALKVWDATQAKDMLLSVLDDLPGPARDIVLFNAGAAIYVADRAATLGEGIELAREAIRSGAARDKLQQLVAYSTQAKQA.

5-phospho-alpha-D-ribose 1-diphosphate contacts are provided by residues Gly83, 86-87 (GD), Thr91, 93-96 (NIST), 111-119 (KHGGRSVSS), and Ser123. Gly83 provides a ligand contact to anthranilate. Ser95 contributes to the Mg(2+) binding site. Residue Arg169 coordinates anthranilate. Residues Asp228 and Glu229 each coordinate Mg(2+).

The protein belongs to the anthranilate phosphoribosyltransferase family. In terms of assembly, homodimer. Mg(2+) serves as cofactor.

The enzyme catalyses N-(5-phospho-beta-D-ribosyl)anthranilate + diphosphate = 5-phospho-alpha-D-ribose 1-diphosphate + anthranilate. It functions in the pathway amino-acid biosynthesis; L-tryptophan biosynthesis; L-tryptophan from chorismate: step 2/5. Its function is as follows. Catalyzes the transfer of the phosphoribosyl group of 5-phosphorylribose-1-pyrophosphate (PRPP) to anthranilate to yield N-(5'-phosphoribosyl)-anthranilate (PRA). This Thiobacillus denitrificans (strain ATCC 25259 / T1) protein is Anthranilate phosphoribosyltransferase.